We begin with the raw amino-acid sequence, 208 residues long: Uracil phosphoribosyltransferase (208 aa).

5-phospho-alpha-D-ribose 1-diphosphate contacts are provided by residues Arg78, Arg103, and Asp130–Ser138. Uracil contacts are provided by residues Ile193 and Gly198–Ala200. Residue Asp199 coordinates 5-phospho-alpha-D-ribose 1-diphosphate.

It belongs to the UPRTase family. Mg(2+) serves as cofactor.

The catalysed reaction is UMP + diphosphate = 5-phospho-alpha-D-ribose 1-diphosphate + uracil. It participates in pyrimidine metabolism; UMP biosynthesis via salvage pathway; UMP from uracil: step 1/1. Its activity is regulated as follows. Allosterically activated by GTP. In terms of biological role, catalyzes the conversion of uracil and 5-phospho-alpha-D-ribose 1-diphosphate (PRPP) to UMP and diphosphate. This Pelobacter propionicus (strain DSM 2379 / NBRC 103807 / OttBd1) protein is Uracil phosphoribosyltransferase.